The primary structure comprises 333 residues: MASRKETPNGKTLDTPVKQIQIEGLVVMKIIKHYQEEGQGSEVVQGVLLGLVVEDQLEITNCFPFPQHTEDDADFDEVQYQMEMMRSLRHVNIDHLHVGWYQSTLYGSFVSRALLDSQFSYQHAIEESVVLIYDPIKTAQGSLCLKAYRLTPKLMEICKEKDFSSEGLKKASVGYEHMFEEVPIVIKNSHLINVLLWELEEKSTAADKHELLSLSSSSHLEKSLQMLMDRVDDMSQDIVKYNNYSRSLSKQQQQKHQYVQRRQQENAQRQSRGEPPLPEEDLTKMFKPPQPPPRMDTLLIASQINTYCQTIKEFTSQNLGKLFMAEALQGPSS.

The 135-residue stretch at 20 to 154 folds into the MPN domain; the sequence is IQIEGLVVMK…LKAYRLTPKL (135 aa). A disordered region spans residues 249-295; sequence SKQQQQKHQYVQRRQQENAQRQSRGEPPLPEEDLTKMFKPPQPPPRM. A compositionally biased stretch (low complexity) spans 250–261; sequence KQQQQKHQYVQR.

It belongs to the eIF-3 subunit H family. As to quaternary structure, component of the eukaryotic translation initiation factor 3 (eIF-3) complex, which is composed of 13 subunits: eif3a, eif3b, eif3c, eif3d, eif3e, eif3f, eif3g, eif3h, eif3i, eif3j, eif3k, eif3l and eif3m.

It localises to the cytoplasm. Functionally, component of the eukaryotic translation initiation factor 3 (eIF-3) complex, which is involved in protein synthesis of a specialized repertoire of mRNAs and, together with other initiation factors, stimulates binding of mRNA and methionyl-tRNAi to the 40S ribosome. The eIF-3 complex specifically targets and initiates translation of a subset of mRNAs involved in cell proliferation. This chain is Eukaryotic translation initiation factor 3 subunit H-B (eif3hb), found in Danio rerio (Zebrafish).